Here is a 1872-residue protein sequence, read N- to C-terminus: Fatty acid synthase beta subunit pkiC (1872 aa).

The tract at residues 174–425 (VFGGQGECSR…DQSRIPFRDR (252 aa)) is acetyltransferase (AT) domain. Positions 591 to 836 (NRVLGAPPIM…IIAATPGVSD (246 aa)) are enoyl reductase (ER) domain. The interval 1111–1132 (TTPASWSTLSLTERDTSEETSD) is disordered. Residues 1158–1597 (PSHPLWMRAL…MPLEKLVVEI (440 aa)) are dehydratase (DH) domain. One can recognise a MaoC-like domain in the interval 1518-1617 (PPSNEPYAQL…CFSILAKRKE (100 aa)).

The protein belongs to the fungal fatty acid synthetase subunit beta family. As to quaternary structure, [Alpha(6)beta(6)] hexamers of two multifunctional subunits (alpha and beta).

The catalysed reaction is acetyl-CoA + n malonyl-CoA + 2n NADPH + 4n H(+) = a long-chain-acyl-CoA + n CoA + n CO2 + 2n NADP(+).. It catalyses the reaction holo-[ACP] + acetyl-CoA = acetyl-[ACP] + CoA. The enzyme catalyses holo-[ACP] + malonyl-CoA = malonyl-[ACP] + CoA. It carries out the reaction a (3R)-hydroxyacyl-[ACP] = a (2E)-enoyl-[ACP] + H2O. The catalysed reaction is a 2,3-saturated acyl-[ACP] + NAD(+) = a (2E)-enoyl-[ACP] + NADH + H(+). It catalyses the reaction (9Z)-octadecenoyl-[ACP] + H2O = (9Z)-octadecenoate + holo-[ACP] + H(+). The protein operates within secondary metabolite biosynthesis. Functionally, fatty acid synthase beta subunit; part of the pki gene cluster that mediates the biosynthesis of 2,4-dihydroxy-3-methyl-6-(2-oxoundecyl)benzaldehyde. The first step in the pathway is the generation of the decanoyl starter unit by the FAS composed of subunits pkiB and pkiC, which is then transferred directly from the FAS to the SAT domain of the non-reducing polyketide synthase pkiA. PkiA condenses the decanoyyl starter unit with 4 malonyl-CoA units and performs one methylation step to yield 2,4-dihydroxy-3-methyl-6-(2-oxoundecyl)benzaldehyde. The sequence is that of Fatty acid synthase beta subunit pkiC from Emericella nidulans (strain FGSC A4 / ATCC 38163 / CBS 112.46 / NRRL 194 / M139) (Aspergillus nidulans).